Here is a 645-residue protein sequence, read N- to C-terminus: 1,4-alpha-glucan branching enzyme GlgB (645 aa).

Catalysis depends on aspartate 309, which acts as the Nucleophile. Glutamate 352 functions as the Proton donor in the catalytic mechanism. Residues 619-645 (VKTRKGSKKQDGSKTKVRSNVTSRGKR) form a disordered region. A compositionally biased stretch (polar residues) spans 636–645 (RSNVTSRGKR).

This sequence belongs to the glycosyl hydrolase 13 family. GlgB subfamily. In terms of assembly, monomer.

The catalysed reaction is Transfers a segment of a (1-&gt;4)-alpha-D-glucan chain to a primary hydroxy group in a similar glucan chain.. It participates in glycan biosynthesis; glycogen biosynthesis. Functionally, catalyzes the formation of the alpha-1,6-glucosidic linkages in glycogen by scission of a 1,4-alpha-linked oligosaccharide from growing alpha-1,4-glucan chains and the subsequent attachment of the oligosaccharide to the alpha-1,6 position. This is 1,4-alpha-glucan branching enzyme GlgB from Bacillus cereus (strain ATCC 10987 / NRS 248).